Reading from the N-terminus, the 161-residue chain is Myosin regulatory light chain A, smooth adductor muscle (161 aa).

The residue at position 1 (A1) is a Blocked amino end (Ala). EF-hand domains are found at residues 20–55 (KLMQ…LGRT) and 89–124 (DTEE…MGDN). Ca(2+) contacts are provided by D33, N35, D37, and D44.

In molluscan muscle, calcium regulation is associated with myosin rather than with actin. Muscle myosin contains two types of light chains: the catalytic light chain, essential for ATPase activity, and the regulatory light chain, a calcium-binding protein responsible for Ca(2+) dependent binding and Ca(2+) dependent Mg-ATPase activity. The polypeptide is Myosin regulatory light chain A, smooth adductor muscle (Mizuhopecten yessoensis (Japanese scallop)).